The following is a 407-amino-acid chain: Phosphopentomutase (407 aa).

Positions 10, 306, 311, 347, 348, and 359 each coordinate Mn(2+).

This sequence belongs to the phosphopentomutase family. Mn(2+) serves as cofactor.

It localises to the cytoplasm. The catalysed reaction is 2-deoxy-alpha-D-ribose 1-phosphate = 2-deoxy-D-ribose 5-phosphate. The enzyme catalyses alpha-D-ribose 1-phosphate = D-ribose 5-phosphate. Its pathway is carbohydrate degradation; 2-deoxy-D-ribose 1-phosphate degradation; D-glyceraldehyde 3-phosphate and acetaldehyde from 2-deoxy-alpha-D-ribose 1-phosphate: step 1/2. Functionally, isomerase that catalyzes the conversion of deoxy-ribose 1-phosphate (dRib-1-P) and ribose 1-phosphate (Rib-1-P) to deoxy-ribose 5-phosphate (dRib-5-P) and ribose 5-phosphate (Rib-5-P), respectively. The chain is Phosphopentomutase from Salmonella schwarzengrund (strain CVM19633).